Consider the following 675-residue polypeptide: Myosin-binding protein 3 (675 aa).

The chain crosses the membrane as a helical span at residues 17–37 (ITVILVYAFLEWLLMFFIFLN). Disordered regions lie at residues 225 to 274 (LRSI…EEET) and 286 to 315 (SKNF…TPTS). Positions 238–251 (AKSRVSEDEQRNDD) are enriched in basic and acidic residues. A GTD-binding domain is found at 355 to 453 (RTIERLRETV…QLQRELEVYR (99 aa)). The span at 474–496 (CEADDDDKEEENREEDNSSEMDV) shows a compositional bias: acidic residues. Disordered regions lie at residues 474–497 (CEAD…MDVD), 542–565 (DKES…GHGG), and 582–605 (AENE…GSDS). Residues 596–605 (SDEKNFGSDS) are compositionally biased toward basic and acidic residues. Positions 605 to 633 (SEKLEIIKQVDSVYERLQELETDGEFLKN) form a coiled coil.

As to quaternary structure, interacts with myosin XI-K.

The protein localises to the membrane. Membrane-anchored myosin receptors that define a distinct, plant-specific transport vesicle compartment. In Arabidopsis thaliana (Mouse-ear cress), this protein is Myosin-binding protein 3.